The sequence spans 677 residues: UvrABC system protein B (677 aa).

In terms of domain architecture, Helicase ATP-binding spans 25 to 412 (QGVNGGERYQ…GGEVAQQVIR (388 aa)). ATP is bound at residue 38 to 45 (GATGTGKT). The Beta-hairpin signature appears at 91–114 (YYDYYQPEAYVPVSDTYIAKTASI). One can recognise a Helicase C-terminal domain in the interval 429 to 591 (QVDDLLGEIR…IVPTAAGKKA (163 aa)). Positions 639–674 (PELIDQLEGKMKEAAKKLDFEDAANLRDRIKQLRQK) constitute a UVR domain.

This sequence belongs to the UvrB family. Forms a heterotetramer with UvrA during the search for lesions. Interacts with UvrC in an incision complex.

It is found in the cytoplasm. In terms of biological role, the UvrABC repair system catalyzes the recognition and processing of DNA lesions. A damage recognition complex composed of 2 UvrA and 2 UvrB subunits scans DNA for abnormalities. Upon binding of the UvrA(2)B(2) complex to a putative damaged site, the DNA wraps around one UvrB monomer. DNA wrap is dependent on ATP binding by UvrB and probably causes local melting of the DNA helix, facilitating insertion of UvrB beta-hairpin between the DNA strands. Then UvrB probes one DNA strand for the presence of a lesion. If a lesion is found the UvrA subunits dissociate and the UvrB-DNA preincision complex is formed. This complex is subsequently bound by UvrC and the second UvrB is released. If no lesion is found, the DNA wraps around the other UvrB subunit that will check the other stand for damage. The sequence is that of UvrABC system protein B from Parasynechococcus marenigrum (strain WH8102).